Consider the following 145-residue polypeptide: uncharacterized protein (145 aa).

The protein belongs to the SAP18 family.

Its subcellular location is the cytoplasm. It is found in the nucleus. This is an uncharacterized protein from Schizosaccharomyces pombe (strain 972 / ATCC 24843) (Fission yeast).